A 23-amino-acid chain; its full sequence is Cardioactive peptide CAP23 (23 aa).

A disulfide bridge connects residues Cys7 and Cys19.

Belongs to the GBP/PSP1/paralytic peptide family.

Its function is as follows. Has excitatory effects on a semi-isolated heart from larval Manduca sexta, causing an inotropic effect at low concentrations of peptide and chronotropic and inotropic effects at high doses. The polypeptide is Cardioactive peptide CAP23 (Spodoptera eridania (Southern armyworm)).